The primary structure comprises 706 residues: Elongation factor G (706 aa).

In terms of domain architecture, tr-type G spans 8-290 (NRYRNIGICA…AVIDYLPAPT (283 aa)). GTP-binding positions include 17-24 (AHVDAGKT), 88-92 (DTPGH), and 142-145 (NKMD).

The protein belongs to the TRAFAC class translation factor GTPase superfamily. Classic translation factor GTPase family. EF-G/EF-2 subfamily.

Its subcellular location is the cytoplasm. In terms of biological role, catalyzes the GTP-dependent ribosomal translocation step during translation elongation. During this step, the ribosome changes from the pre-translocational (PRE) to the post-translocational (POST) state as the newly formed A-site-bound peptidyl-tRNA and P-site-bound deacylated tRNA move to the P and E sites, respectively. Catalyzes the coordinated movement of the two tRNA molecules, the mRNA and conformational changes in the ribosome. The sequence is that of Elongation factor G from Stutzerimonas stutzeri (strain A1501) (Pseudomonas stutzeri).